We begin with the raw amino-acid sequence, 549 residues long: Glucose-6-phosphate isomerase (549 aa).

Glu355 serves as the catalytic Proton donor. Active-site residues include His386 and Lys514.

The protein belongs to the GPI family.

It is found in the cytoplasm. The catalysed reaction is alpha-D-glucose 6-phosphate = beta-D-fructose 6-phosphate. It participates in carbohydrate biosynthesis; gluconeogenesis. Its pathway is carbohydrate degradation; glycolysis; D-glyceraldehyde 3-phosphate and glycerone phosphate from D-glucose: step 2/4. Its function is as follows. Catalyzes the reversible isomerization of glucose-6-phosphate to fructose-6-phosphate. The protein is Glucose-6-phosphate isomerase of Aeromonas salmonicida (strain A449).